Reading from the N-terminus, the 85-residue chain is Small ribosomal subunit protein uS17 (85 aa).

This sequence belongs to the universal ribosomal protein uS17 family. Part of the 30S ribosomal subunit.

Its function is as follows. One of the primary rRNA binding proteins, it binds specifically to the 5'-end of 16S ribosomal RNA. In Syntrophus aciditrophicus (strain SB), this protein is Small ribosomal subunit protein uS17.